Here is a 276-residue protein sequence, read N- to C-terminus: Eukaryotic translation initiation factor 3 subunit G (276 aa).

Phosphoserine is present on serine 148. One can recognise an RRM domain in the interval 195-274 (TTLKISQLNS…LILHLEWSKK (80 aa)).

The protein belongs to the eIF-3 subunit G family. Component of the eukaryotic translation initiation factor 3 (eIF-3) complex.

The protein resides in the cytoplasm. Functionally, RNA-binding component of the eukaryotic translation initiation factor 3 (eIF-3) complex, which is involved in protein synthesis of a specialized repertoire of mRNAs and, together with other initiation factors, stimulates binding of mRNA and methionyl-tRNAi to the 40S ribosome. The eIF-3 complex specifically targets and initiates translation of a subset of mRNAs involved in cell proliferation. This subunit can bind 18S rRNA. The protein is Eukaryotic translation initiation factor 3 subunit G of Debaryomyces hansenii (strain ATCC 36239 / CBS 767 / BCRC 21394 / JCM 1990 / NBRC 0083 / IGC 2968) (Yeast).